The sequence spans 894 residues: Histone-lysine N-methyltransferase EZ2 (894 aa).

The segment covering methionine 1–serine 11 has biased composition (low complexity). 3 disordered regions span residues methionine 1 to alanine 25, serine 395 to lysine 447, and lysine 491 to glutamine 513. Residues serine 395–proline 421 are compositionally biased toward polar residues. The segment covering leucine 425–proline 435 has biased composition (basic residues). Polar residues predominate over residues proline 503 to glutamine 513. Residues threonine 527–alanine 577 enclose the SANT domain. Residues alanine 627 to aspartate 731 form the CXC domain. The region spanning glutamine 746–arginine 861 is the SET domain. The disordered stretch occupies residues alanine 867–arginine 894. Basic and acidic residues predominate over residues arginine 872–valine 884. Positions serine 885–arginine 894 are enriched in basic residues.

It belongs to the class V-like SAM-binding methyltransferase superfamily. Histone-lysine methyltransferase family. EZ subfamily.

It is found in the nucleus. The catalysed reaction is L-lysyl(27)-[histone H3] + 3 S-adenosyl-L-methionine = N(6),N(6),N(6)-trimethyl-L-lysyl(27)-[histone H3] + 3 S-adenosyl-L-homocysteine + 3 H(+). Functionally, polycomb group (PcG) protein. Catalytic subunit of some PcG multiprotein complex, which methylates 'Lys-27' of histone H3, leading to transcriptional repression of the affected target genes. PcG proteins are not required to initiate repression, but to maintain it during later stages of development. The polypeptide is Histone-lysine N-methyltransferase EZ2 (EZ2) (Zea mays (Maize)).